The following is a 218-amino-acid chain: Octanoyltransferase (218 aa).

The BPL/LPL catalytic domain occupies 32–218 (GDAPEAVWLL…LRTFSRSFPD (187 aa)). Substrate contacts are provided by residues 71–78 (RGGQYTYH), 151–153 (AIG), and 164–166 (GLS). Residue Cys182 is the Acyl-thioester intermediate of the active site.

Belongs to the LipB family.

The protein localises to the cytoplasm. The catalysed reaction is octanoyl-[ACP] + L-lysyl-[protein] = N(6)-octanoyl-L-lysyl-[protein] + holo-[ACP] + H(+). The protein operates within protein modification; protein lipoylation via endogenous pathway; protein N(6)-(lipoyl)lysine from octanoyl-[acyl-carrier-protein]: step 1/2. Catalyzes the transfer of endogenously produced octanoic acid from octanoyl-acyl-carrier-protein onto the lipoyl domains of lipoate-dependent enzymes. Lipoyl-ACP can also act as a substrate although octanoyl-ACP is likely to be the physiological substrate. The sequence is that of Octanoyltransferase from Cereibacter sphaeroides (strain ATCC 17025 / ATH 2.4.3) (Rhodobacter sphaeroides).